The sequence spans 370 residues: MQFELLSTSAGARRGRLTLAHGAVETPVFMPVGTYGTVKAMTPAMLSDVGAQICLGNTFHLWLRPGLDIVGAHGGLHRFMGWDKPILTDSGGFQVFSLGALRKISEEGVKFASPIDGARLFLTPEISMQIQTVLNSDVVMIFDECTPYPATRDEAAKSMRLSRRWARRSRDEFDRLENANALFGIVQGGMYEDLRDESLGALQDIGFHGFAIGGLSVGEPKDDMARILAHTAPRLPADKPRYLMGVGTPEDIVDGIANGIDMFDCVMPTRNARNGWLFTRYGDLKIKNAVHKADTRPLDPSCSCYTCRNFSRSYLHHLHRAGEILGSMLNTVHNLHYYQTLTAELRDAIAADRFADYVTRFRSERATGAH.

Residue Asp89 is the Proton acceptor of the active site. Substrate contacts are provided by residues 89 to 93 (DSGGF), Asp143, Gln187, and Gly214. An RNA binding region spans residues 245–251 (GVGTPED). The active-site Nucleophile is the Asp264. The RNA binding; important for wobble base 34 recognition stretch occupies residues 269–273 (TRNAR). Residues Cys302, Cys304, Cys307, and His333 each coordinate Zn(2+).

It belongs to the queuine tRNA-ribosyltransferase family. In terms of assembly, homodimer. Within each dimer, one monomer is responsible for RNA recognition and catalysis, while the other monomer binds to the replacement base PreQ1. The cofactor is Zn(2+).

It carries out the reaction 7-aminomethyl-7-carbaguanine + guanosine(34) in tRNA = 7-aminomethyl-7-carbaguanosine(34) in tRNA + guanine. The protein operates within tRNA modification; tRNA-queuosine biosynthesis. Functionally, catalyzes the base-exchange of a guanine (G) residue with the queuine precursor 7-aminomethyl-7-deazaguanine (PreQ1) at position 34 (anticodon wobble position) in tRNAs with GU(N) anticodons (tRNA-Asp, -Asn, -His and -Tyr). Catalysis occurs through a double-displacement mechanism. The nucleophile active site attacks the C1' of nucleotide 34 to detach the guanine base from the RNA, forming a covalent enzyme-RNA intermediate. The proton acceptor active site deprotonates the incoming PreQ1, allowing a nucleophilic attack on the C1' of the ribose to form the product. After dissociation, two additional enzymatic reactions on the tRNA convert PreQ1 to queuine (Q), resulting in the hypermodified nucleoside queuosine (7-(((4,5-cis-dihydroxy-2-cyclopenten-1-yl)amino)methyl)-7-deazaguanosine). The sequence is that of Queuine tRNA-ribosyltransferase from Azoarcus sp. (strain BH72).